Consider the following 415-residue polypeptide: Serine hydroxymethyltransferase (415 aa).

(6S)-5,6,7,8-tetrahydrofolate contacts are provided by residues Leu-117 and 121–123 (GHL). At Lys-226 the chain carries N6-(pyridoxal phosphate)lysine.

Belongs to the SHMT family. Homodimer. Pyridoxal 5'-phosphate serves as cofactor.

Its subcellular location is the cytoplasm. The catalysed reaction is (6R)-5,10-methylene-5,6,7,8-tetrahydrofolate + glycine + H2O = (6S)-5,6,7,8-tetrahydrofolate + L-serine. The protein operates within one-carbon metabolism; tetrahydrofolate interconversion. It participates in amino-acid biosynthesis; glycine biosynthesis; glycine from L-serine: step 1/1. Its function is as follows. Catalyzes the reversible interconversion of serine and glycine with tetrahydrofolate (THF) serving as the one-carbon carrier. This reaction serves as the major source of one-carbon groups required for the biosynthesis of purines, thymidylate, methionine, and other important biomolecules. Also exhibits THF-independent aldolase activity toward beta-hydroxyamino acids, producing glycine and aldehydes, via a retro-aldol mechanism. In Leptospira interrogans serogroup Icterohaemorrhagiae serovar copenhageni (strain Fiocruz L1-130), this protein is Serine hydroxymethyltransferase.